We begin with the raw amino-acid sequence, 950 residues long: Protocadherin alpha-6 (950 aa).

Positions Met-1 to Gly-29 are cleaved as a signal peptide. Residues Gln-30–Asn-697 are Extracellular-facing. 6 Cadherin domains span residues Ser-34–Phe-133, Ala-157–Phe-242, Glu-243–Ile-350, Ala-351–Phe-455, Ala-456–Leu-565, and Val-581–Ala-678. Asn-257, Asn-265, Asn-386, and Asn-548 each carry an N-linked (GlcNAc...) asparagine glycan. The chain crosses the membrane as a helical span at residues Val-698–Tyr-718. The Cytoplasmic segment spans residues Thr-719–Gln-950. 4 PXXP repeats span residues Pro-799 to Pro-802, Pro-832 to Pro-835, Pro-873 to Pro-876, and Pro-891 to Pro-894. The 4 X 4 AA repeats of P-X-X-P stretch occupies residues Pro-799 to Pro-894. The interval Ala-830 to Ile-889 is disordered. The interval Gln-901 to Gln-950 is disordered. The span at Asp-909 to Lys-923 shows a compositional bias: basic and acidic residues.

The protein localises to the cell membrane. Functionally, potential calcium-dependent cell-adhesion protein. May be involved in the establishment and maintenance of specific neuronal connections in the brain. In Pan troglodytes (Chimpanzee), this protein is Protocadherin alpha-6 (PCDHA6).